A 608-amino-acid polypeptide reads, in one-letter code: Protein transport protein SEC9 (608 aa).

Disordered regions lie at residues 1 to 23 and 50 to 307; these read MGFKKMFKKKDPTESEIRESMQD and VTQK…QTAA. Positions 9–21 are enriched in basic and acidic residues; it reads KKDPTESEIRESM. Low complexity-rich tracts occupy residues 54 to 67 and 74 to 85; these read SSAAPPAARSNPYA and SGGNPYAAAAAG. The span at 100–121 shows a compositional bias: gly residues; it reads NGGGGNGGSNSNGGSNSNGGSN. Low complexity predominate over residues 122–134; the sequence is GSPYKMNNGGNNA. Basic and acidic residues predominate over residues 169–183; sequence SKKEEAPPPLEDPRL. Over residues 198–215 the composition is skewed to acidic residues; it reads ERDDYEPVYDVGLPEEPE. A compositionally biased stretch (basic and acidic residues) spans 241-260; the sequence is NVDRELEEDKTALFGPRDDP. Residues 390–452 form the t-SNARE coiled-coil homology 1 domain; that stretch reads RFTKQQSAAS…KIAEDKAKEL (63 aa). Residues 514-533 are disordered; that stretch reads GEKSKHRKEMMSKYGSRPGR. Residues 545–607 form the t-SNARE coiled-coil homology 2 domain; sequence DILEDEIDNN…HLNTARLAGI (63 aa).

It belongs to the SNAP-25 family.

The protein is Protein transport protein SEC9 (SEC9) of Yarrowia lipolytica (strain CLIB 122 / E 150) (Yeast).